Reading from the N-terminus, the 180-residue chain is Large ribosomal subunit protein mL41 (180 aa).

The N-terminal 21 residues, 1–21 (MKLVLVSTRGVRSLNSTNFPA), are a transit peptide targeting the mitochondrion.

The protein belongs to the mitochondrion-specific ribosomal protein mL41 family. Component of the mitochondrial ribosome large subunit (39S) which comprises a 16S rRNA and about 50 distinct proteins.

The protein resides in the mitochondrion. The chain is Large ribosomal subunit protein mL41 (mrpl-41) from Caenorhabditis elegans.